The following is a 305-amino-acid chain: Secreted mono- and diacylglycerol lipase A (305 aa).

Residues 1–26 (MRLSFFTALSAVASLGYALPGKLQSR) form the signal peptide. Cystine bridges form between Cys-62–Cys-67 and Cys-129–Cys-132. The active-site Nucleophile is Ser-171. The Charge relay system role is filled by Asp-225. N-linked (GlcNAc...) asparagine glycosylation is present at Asn-251. His-285 serves as the catalytic Charge relay system. The propeptide at 303–305 (KRV) is removed in mature form.

It belongs to the AB hydrolase superfamily. Lipase family. Class 3 subfamily. Post-translationally, multiple forms of this lipase are due to the presence of different carbohydrates, which may contribute to the stability of this lipase but not to the enzyme activity.

The protein resides in the secreted. It catalyses the reaction a monoacylglycerol + H2O = glycerol + a fatty acid + H(+). It carries out the reaction a diacylglycerol + H2O = a monoacylglycerol + a fatty acid + H(+). Both Fe(3+) and Hg(2+) inhibit the activity significantly. Secreted lipase strictly specific to mono- and diacylglycerol, but not triacylglycerol. Hydrolyzes long-chain monoacylglycerols most efficiently with the highest activities observed on 1- and 3- monopalmitoyl-sn-glycerol or 1-monostearoyl-rac-glycerol. Prefers to attack alpha positions to beta positions of monoacylglycerol, but shows no stereospecificity on mono- and diacylglycerol. The polypeptide is Secreted mono- and diacylglycerol lipase A (Penicillium camembertii).